A 328-amino-acid polypeptide reads, in one-letter code: MNIAIDAMGGDHAPQEIVRGAARAAAHFSDIRITLIGDEAKIRPYLQNEERISIIHADEVIEATDEPVRAVRRKKNSSMVRMAEEVREGRADACISAGNTGALMAAGLFVVGRIAGIDRPALAPTLPTLDGKGFVFLDVGANVDARPEHLQQYALMGHVYAKQVRGIANPRIGLLNVGTEDQKGNETTKRAFALLKETNLHFIGNVEARDLLQGVADVVVADGFSGNVALKTIEGTAMALFSLLKQTLTSSVTAKLAAAALKPKLSGLKKMMDYSEYGGAALFGLNAPVIKAHGSSDANAIFHAVRQAREMVANDVIGTIKAELERTS.

Belongs to the PlsX family. In terms of assembly, homodimer. Probably interacts with PlsY.

The protein resides in the cytoplasm. The catalysed reaction is a fatty acyl-[ACP] + phosphate = an acyl phosphate + holo-[ACP]. It participates in lipid metabolism; phospholipid metabolism. Its function is as follows. Catalyzes the reversible formation of acyl-phosphate (acyl-PO(4)) from acyl-[acyl-carrier-protein] (acyl-ACP). This enzyme utilizes acyl-ACP as fatty acyl donor, but not acyl-CoA. This Geobacillus thermodenitrificans (strain NG80-2) protein is Phosphate acyltransferase.